We begin with the raw amino-acid sequence, 305 residues long: Probable lipid kinase YegS-like (305 aa).

The DAGKc domain maps to 1–129 (MTQRRAMLIL…VDLGEVGGKL (129 aa)). ATP is bound by residues Thr-39, 65–71 (GDGTLRD), and Thr-92. Mg(2+) contacts are provided by Leu-210, Asp-213, and Leu-215. The Proton acceptor role is filled by Glu-268.

It belongs to the diacylglycerol/lipid kinase family. YegS lipid kinase subfamily. Requires Mg(2+) as cofactor. It depends on Ca(2+) as a cofactor.

The protein localises to the cytoplasm. Functionally, probably phosphorylates lipids; the in vivo substrate is unknown. In Pseudomonas syringae pv. syringae (strain B728a), this protein is Probable lipid kinase YegS-like.